A 288-amino-acid chain; its full sequence is Diaminopimelate epimerase (288 aa).

Asn-13, Gln-46, and Asn-66 together coordinate substrate. Cys-75 serves as the catalytic Proton donor. Residues 76–77 (GN), Asn-166, Asn-199, and 217–218 (ER) each bind substrate. The Proton acceptor role is filled by Cys-226. 227–228 (GT) is a substrate binding site.

Belongs to the diaminopimelate epimerase family. As to quaternary structure, homodimer.

The protein resides in the cytoplasm. The catalysed reaction is (2S,6S)-2,6-diaminopimelate = meso-2,6-diaminopimelate. Its pathway is amino-acid biosynthesis; L-lysine biosynthesis via DAP pathway; DL-2,6-diaminopimelate from LL-2,6-diaminopimelate: step 1/1. Its function is as follows. Catalyzes the stereoinversion of LL-2,6-diaminopimelate (L,L-DAP) to meso-diaminopimelate (meso-DAP), a precursor of L-lysine and an essential component of the bacterial peptidoglycan. The protein is Diaminopimelate epimerase of Cupriavidus pinatubonensis (strain JMP 134 / LMG 1197) (Cupriavidus necator (strain JMP 134)).